The primary structure comprises 624 residues: tRNA uridine 5-carboxymethylaminomethyl modification enzyme MnmG (624 aa).

FAD is bound by residues 16–21, Val128, and Ser183; that span reads GAGHAG. 275–289 is a binding site for NAD(+); the sequence is GPRYCPSIEDKVVRF. Residue Gln372 coordinates FAD.

This sequence belongs to the MnmG family. As to quaternary structure, homodimer. Heterotetramer of two MnmE and two MnmG subunits. Requires FAD as cofactor.

It is found in the cytoplasm. In terms of biological role, NAD-binding protein involved in the addition of a carboxymethylaminomethyl (cmnm) group at the wobble position (U34) of certain tRNAs, forming tRNA-cmnm(5)s(2)U34. The polypeptide is tRNA uridine 5-carboxymethylaminomethyl modification enzyme MnmG (Geobacter metallireducens (strain ATCC 53774 / DSM 7210 / GS-15)).